The chain runs to 443 residues: Chromosome partition protein MukF (443 aa).

The segment at 209 to 237 is leucine-zipper; the sequence is LDETSGNLRELQDVLNASGDKLQSQLLRI.

This sequence belongs to the MukF family. As to quaternary structure, interacts, and probably forms a ternary complex, with MukE and MukB via its C-terminal region. The complex formation is stimulated by calcium or magnesium. It is required for an interaction between MukE and MukB.

It is found in the cytoplasm. It localises to the nucleoid. Functionally, involved in chromosome condensation, segregation and cell cycle progression. May participate in facilitating chromosome segregation by condensation DNA from both sides of a centrally located replisome during cell division. Not required for mini-F plasmid partitioning. Probably acts via its interaction with MukB and MukE. Overexpression results in anucleate cells. It has a calcium binding activity. The polypeptide is Chromosome partition protein MukF (Glaesserella parasuis serovar 5 (strain SH0165) (Haemophilus parasuis)).